The chain runs to 166 residues: MSEWMKKSPLEWEDYVYKEVRVIACEKEYKGWLLTTDPVSANIVLVNFLEDGRLSVTGIMGHSVQTVETISEGDHRVREKLMHVFASGDCKGYSPEDLEEKRTSLKKWLEKNHIPVTEQGDAQRTLCVAGVLTIDPPYAPENCSSSNEIILSRIQDLIQGHLSASQ.

The Sm domain maps to 4–73; that stretch reads WMKKSPLEWE…VQTVETISEG (70 aa). The AD domain maps to 68-166; it reads ETISEGDHRV…LIQGHLSASQ (99 aa). 2 positions are modified to phosphoserine: Ser94 and Ser165.

As to quaternary structure, part of the core SMN complex that contains SMN1, GEMIN2/SIP1, DDX20/GEMIN3, GEMIN4, GEMIN5, GEMIN6, GEMIN7, GEMIN8 and STRAP/UNRIP. Part of the SMN-Sm complex that contains SMN1, GEMIN2/SIP1, DDX20/GEMIN3, GEMIN4, GEMIN5, GEMIN6, GEMIN7, GEMIN8, STRAP/UNRIP and the Sm proteins SNRPB, SNRPD1, SNRPD2, SNRPD3, SNRPE, SNRPF and SNRPG. Interacts with GEMIN7; the interaction is direct. Interacts with GEMIN8; the interaction is direct. Interacts with SNRPB, SNRPD2, SNRPD3 and SNRPE; the interaction is direct.

The protein resides in the nucleus. Its subcellular location is the nucleoplasm. It localises to the gem. It is found in the cytoplasm. Its function is as follows. The SMN complex catalyzes the assembly of small nuclear ribonucleoproteins (snRNPs), the building blocks of the spliceosome, and thereby plays an important role in the splicing of cellular pre-mRNAs. Most spliceosomal snRNPs contain a common set of Sm proteins SNRPB, SNRPD1, SNRPD2, SNRPD3, SNRPE, SNRPF and SNRPG that assemble in a heptameric protein ring on the Sm site of the small nuclear RNA to form the core snRNP (Sm core). In the cytosol, the Sm proteins SNRPD1, SNRPD2, SNRPE, SNRPF and SNRPG are trapped in an inactive 6S pICln-Sm complex by the chaperone CLNS1A that controls the assembly of the core snRNP. To assemble core snRNPs, the SMN complex accepts the trapped 5Sm proteins from CLNS1A forming an intermediate. Binding of snRNA inside 5Sm triggers eviction of the SMN complex, thereby allowing binding of SNRPD3 and SNRPB to complete assembly of the core snRNP. In Mus musculus (Mouse), this protein is Gem-associated protein 6 (Gemin6).